The primary structure comprises 480 residues: Thyroid receptor-interacting protein 6 (480 aa).

Residues 1-12 (MSGPTWLPPKQP) are compositionally biased toward pro residues. A disordered region spans residues 1-43 (MSGPTWLPPKQPEPSRLPQGRSLPRGALGPPTAHGATLQPHPR). The residue at position 25 (arginine 25) is an Asymmetric dimethylarginine; alternate. Arginine 25 carries the post-translational modification Omega-N-methylarginine; alternate. A Phosphotyrosine; by SRC modification is found at tyrosine 55. The disordered stretch occupies residues 57-84 (PPGVPEDRGPTWVGSHGTPQRLQGLPPD). Phosphoserine is present on serine 92. The tract at residues 107–134 (LDGGRSHAPRRPDRQAFEAPPPHAYRGG) is disordered. Over residues 108 to 122 (DGGRSHAPRRPDRQA) the composition is skewed to basic and acidic residues. Residues arginine 111, arginine 183, and arginine 190 each carry the omega-N-methylarginine modification. Serine 193 carries the post-translational modification Phosphoserine. Omega-N-methylarginine occurs at positions 209 and 242. The interval 218–257 (RSHREPGPGVPEGPSGVHIPAGGGRGGGHEPQGPLGQPPE) is disordered. Over residues 238-247 (AGGGRGGGHE) the composition is skewed to gly residues. LIM zinc-binding domains are found at residues 281–339 (GRCG…YVAT), 341–401 (EKCS…KFAP), and 404–471 (SVCG…RIQE). An interaction with MAGI1 and PTPN13 region spans residues 473–480 (SATVTTDC).

This sequence belongs to the zyxin/ajuba family. Specifically interacts with the ligand binding domain of the thyroid receptor (TR) in the presence of thyroid hormone. Interacts (via the third LIM domain and C-terminus) with PTPN13 (via the second PDZ domain). Interacts (via the second LIM domain or via the third LIM domain plus C-terminus) with PDLIM4 (via PDZ domain). Found in a complex with PTPN13 and PDLIM4. Interacts with SVIL isoform 2. Interacts with LPAR2 but not other LPA receptors. Interacts with PRKAA2. Interacts with MAGI1. Interacts with SCRIB. In case of infection, interacts with S.typhimurium protein sseI. Post-translationally, phosphorylation at Tyr-55 by SRC is required for enhancement of lysophosphatidic acid-induced cell migration. Tyr-55 is dephosphorylated by PTPN13. Highly expressed in kidney, stomach, lung, heart and testis. Low expression levels in brain, colon, thymus, pancreas and skin. Not expressed in skeletal muscle.

The protein localises to the cytoplasm. It is found in the cytoskeleton. The protein resides in the cell junction. Its subcellular location is the focal adhesion. It localises to the nucleus. In terms of biological role, relays signals from the cell surface to the nucleus to weaken adherens junction and promote actin cytoskeleton reorganization and cell invasiveness. Involved in lysophosphatidic acid-induced cell adhesion and migration. Acts as a transcriptional coactivator for NF-kappa-B and JUN, and mediates the transrepression of these transcription factors induced by glucocorticoid receptor. This chain is Thyroid receptor-interacting protein 6 (Trip6), found in Mus musculus (Mouse).